Reading from the N-terminus, the 201-residue chain is 3-isopropylmalate dehydratase small subunit (201 aa).

It belongs to the LeuD family. LeuD type 1 subfamily. Heterodimer of LeuC and LeuD.

It catalyses the reaction (2R,3S)-3-isopropylmalate = (2S)-2-isopropylmalate. The protein operates within amino-acid biosynthesis; L-leucine biosynthesis; L-leucine from 3-methyl-2-oxobutanoate: step 2/4. Catalyzes the isomerization between 2-isopropylmalate and 3-isopropylmalate, via the formation of 2-isopropylmaleate. The polypeptide is 3-isopropylmalate dehydratase small subunit (Cereibacter sphaeroides (strain ATCC 17029 / ATH 2.4.9) (Rhodobacter sphaeroides)).